Here is a 250-residue protein sequence, read N- to C-terminus: Probable transcriptional regulatory protein Cag_0165 (250 aa).

This sequence belongs to the TACO1 family.

Its subcellular location is the cytoplasm. In Chlorobium chlorochromatii (strain CaD3), this protein is Probable transcriptional regulatory protein Cag_0165.